The primary structure comprises 352 residues: 4-hydroxy-3-methylbut-2-enyl diphosphate reductase (352 aa).

Cysteine 36 is a [4Fe-4S] cluster binding site. The (2E)-4-hydroxy-3-methylbut-2-enyl diphosphate site is built by histidine 76 and histidine 114. Dimethylallyl diphosphate-binding residues include histidine 76 and histidine 114. 2 residues coordinate isopentenyl diphosphate: histidine 76 and histidine 114. Residue cysteine 136 coordinates [4Fe-4S] cluster. Histidine 164 is a binding site for (2E)-4-hydroxy-3-methylbut-2-enyl diphosphate. Dimethylallyl diphosphate is bound at residue histidine 164. Histidine 164 provides a ligand contact to isopentenyl diphosphate. Glutamate 166 functions as the Proton donor in the catalytic mechanism. Threonine 204 contributes to the (2E)-4-hydroxy-3-methylbut-2-enyl diphosphate binding site. Cysteine 234 contributes to the [4Fe-4S] cluster binding site. The (2E)-4-hydroxy-3-methylbut-2-enyl diphosphate site is built by serine 262, serine 263, asparagine 264, and serine 309. Dimethylallyl diphosphate contacts are provided by serine 262, serine 263, asparagine 264, and serine 309. Serine 262, serine 263, asparagine 264, and serine 309 together coordinate isopentenyl diphosphate.

It belongs to the IspH family. The cofactor is [4Fe-4S] cluster.

The enzyme catalyses isopentenyl diphosphate + 2 oxidized [2Fe-2S]-[ferredoxin] + H2O = (2E)-4-hydroxy-3-methylbut-2-enyl diphosphate + 2 reduced [2Fe-2S]-[ferredoxin] + 2 H(+). The catalysed reaction is dimethylallyl diphosphate + 2 oxidized [2Fe-2S]-[ferredoxin] + H2O = (2E)-4-hydroxy-3-methylbut-2-enyl diphosphate + 2 reduced [2Fe-2S]-[ferredoxin] + 2 H(+). Its pathway is isoprenoid biosynthesis; dimethylallyl diphosphate biosynthesis; dimethylallyl diphosphate from (2E)-4-hydroxy-3-methylbutenyl diphosphate: step 1/1. It participates in isoprenoid biosynthesis; isopentenyl diphosphate biosynthesis via DXP pathway; isopentenyl diphosphate from 1-deoxy-D-xylulose 5-phosphate: step 6/6. Its function is as follows. Catalyzes the conversion of 1-hydroxy-2-methyl-2-(E)-butenyl 4-diphosphate (HMBPP) into a mixture of isopentenyl diphosphate (IPP) and dimethylallyl diphosphate (DMAPP). Acts in the terminal step of the DOXP/MEP pathway for isoprenoid precursor biosynthesis. In Bifidobacterium longum (strain NCC 2705), this protein is 4-hydroxy-3-methylbut-2-enyl diphosphate reductase.